Here is a 456-residue protein sequence, read N- to C-terminus: RuvB-like 1 (456 aa).

Lysine 2 participates in a covalent cross-link: Glycyl lysine isopeptide (Lys-Gly) (interchain with G-Cter in SUMO2). 70-77 (GPPGTGKT) serves as a coordination point for ATP. A Glycyl lysine isopeptide (Lys-Gly) (interchain with G-Cter in SUMO1); alternate cross-link involves residue lysine 225. Residue lysine 225 forms a Glycyl lysine isopeptide (Lys-Gly) (interchain with G-Cter in SUMO2); alternate linkage. Lysine 445 is covalently cross-linked (Glycyl lysine isopeptide (Lys-Gly) (interchain with G-Cter in SUMO2)). The residue at position 453 (lysine 453) is an N6-acetyllysine.

The protein belongs to the RuvB family. As to quaternary structure, forms homohexameric rings. Can form a dodecamer with RUVBL2 made of two stacked hexameric rings; however, even though RUVBL1 and RUVBL2 are present in equimolar ratio, the oligomeric status of each hexamer is not known. Oligomerization may regulate binding to nucleic acids and conversely, binding to nucleic acids may affect the dodecameric assembly. Interaction of the complex with DHX34 results in conformational changes of the N-terminus of the RUVBL2 subunits, resulting in loss of nucleotide binding ability and ATP hydrolysis of the complex. Interacts with the transcriptional activation domain of MYC. Component of the RNA polymerase II holoenzyme complex. May also act to bridge the LEF1/TCF1-CTNNB1 complex and TBP. Component of the NuA4 histone acetyltransferase complex which contains the catalytic subunit KAT5/TIP60 and the subunits EP400, TRRAP/PAF400, BRD8/SMAP, EPC1, DMAP1/DNMAP1, RUVBL1/TIP49, RUVBL2, ING3, actin, ACTL6A/BAF53A, MORF4L1/MRG15, MORF4L2/MRGX, MRGBP, YEATS4/GAS41, VPS72/YL1 and MEAF6. The NuA4 complex interacts with MYC and the adenovirus E1A protein. RUVBL1 interacts with EP400. Component of a NuA4-related complex which contains EP400, TRRAP/PAF400, SRCAP, BRD8/SMAP, EPC1, DMAP1/DNMAP1, RUVBL1/TIP49, RUVBL2, actin, ACTL6A/BAF53A, VPS72 and YEATS4/GAS41. Component of the BAF53 complex, at least composed of ACTL6A/BAF53A, RUVBL1/TIP49, SMARCA2/BRM, and TRRAP/PAF400. Component of some MLL1/MLL complex, at least composed of the core components KMT2A/MLL1, ASH2L, HCFC1/HCF1, WDR5 and RBBP5, as well as the facultative components BACC1, CHD8, E2F6, HSP70, INO80C, KANSL1, LAS1L, MAX, MCRS1, MGA, MYST1/MOF, PELP1, PHF20, PRP31, RING2, RUVB1/TIP49A, RUVB2/TIP49B, SENP3, TAF1, TAF4, TAF6, TAF7, TAF9 and TEX10. Associates with alpha and gamma tubulins, particularly during metaphase and early anaphase. Interacts with NPAT. Component of the chromatin-remodeling INO80 complex; specifically part of a complex module associated with the helicase ATP-binding and the helicase C-terminal domain of INO80. Interacts with IGHMBP2. Interacts with OFD1. Interacts with HINT1. Component of a complex with USP49 and PSMC5. Component of a SWR1-like complex. Component of the R2TP complex composed at least of RUVBL1, RUVBL2, RPAP3 and PIHD1. Component of the PAQosome complex which is responsible for the biogenesis of several protein complexes and which consists of R2TP complex members RUVBL1, RUVBL2, RPAP3 and PIH1D1, URI complex members PFDN2, PFDN6, PDRG1, UXT and URI1 as well as ASDURF, POLR2E and DNAAF10/WDR92. Interacts with PIH1D1. Interacts with ITFG1. Interacts with WAC; WAC positively regulates MTOR activity by promoting the assembly of the TTT complex composed of TELO2, TTI1 and TTI2 and the RUVBL complex composed of RUVBL1 and RUVBL2 into the TTT-RUVBL complex which leads to the dimerization of the mTORC1 complex and its subsequent activation. The RUVBL1/RUVBL2 complex interacts with ZNHIT1 (via HIT-type zinc finger), ZNHIT3 (via HIT-type zinc finger), ZNHIT6 (via HIT-type zinc finger) and DDX59/ZNHIT5 (via HIT-type zinc finger) in the presence of ADP. Interacts with NOPCHAP1; the interaction is direct and disrupted upon ATP binding. Interacts with SMG1. Interacts with NOP2, NOP56 and NUFIP1.

It localises to the nucleus matrix. It is found in the nucleus. The protein localises to the nucleoplasm. Its subcellular location is the cytoplasm. The protein resides in the membrane. It localises to the cytoskeleton. It is found in the microtubule organizing center. The protein localises to the centrosome. Its subcellular location is the dynein axonemal particle. It carries out the reaction ATP + H2O = ADP + phosphate + H(+). In terms of biological role, possesses single-stranded DNA-stimulated ATPase and ATP-dependent DNA helicase (3' to 5') activity; hexamerization is thought to be critical for ATP hydrolysis and adjacent subunits in the ring-like structure contribute to the ATPase activity. Component of the NuA4 histone acetyltransferase complex which is involved in transcriptional activation of select genes principally by acetylation of nucleosomal histones H4 and H2A. This modification may both alter nucleosome-DNA interactions and promote interaction of the modified histones with other proteins which positively regulate transcription. This complex may be required for the activation of transcriptional programs associated with oncogene and proto-oncogene mediated growth induction, tumor suppressor mediated growth arrest and replicative senescence, apoptosis, and DNA repair. The NuA4 complex ATPase and helicase activities seem to be, at least in part, contributed by the association of RUVBL1 and RUVBL2 with EP400. NuA4 may also play a direct role in DNA repair when recruited to sites of DNA damage. Component of a SWR1-like complex that specifically mediates the removal of histone H2A.Z/H2AZ1 from the nucleosome. Proposed core component of the chromatin remodeling INO80 complex which exhibits DNA- and nucleosome-activated ATPase activity and catalyzes ATP-dependent nucleosome sliding. Plays an essential role in oncogenic transformation by MYC and also modulates transcriptional activation by the LEF1/TCF1-CTNNB1 complex. Essential for cell proliferation. May be able to bind plasminogen at cell surface and enhance plasminogen activation. The polypeptide is RuvB-like 1 (Ruvbl1) (Mus musculus (Mouse)).